The sequence spans 413 residues: Serine/threonine transporter SstT (413 aa).

The next 8 helical transmembrane spans lie at 19 to 39 (IFIG…LQNV), 61 to 81 (AVAP…KKIG), 89 to 109 (IIVL…IAGF), 148 to 168 (ALFK…GLAL), 189 to 209 (IVYV…SETL), 223 to 243 (LLAV…PILV), 297 to 317 (IPLG…ILTL), and 325 to 345 (IQIS…CACG).

This sequence belongs to the dicarboxylate/amino acid:cation symporter (DAACS) (TC 2.A.23) family.

The protein resides in the cell inner membrane. It catalyses the reaction L-serine(in) + Na(+)(in) = L-serine(out) + Na(+)(out). It carries out the reaction L-threonine(in) + Na(+)(in) = L-threonine(out) + Na(+)(out). Functionally, involved in the import of serine and threonine into the cell, with the concomitant import of sodium (symport system). In Pasteurella multocida (strain Pm70), this protein is Serine/threonine transporter SstT.